The sequence spans 340 residues: Probable cyclic nucleotide phosphodiesterase PsycPRwf_0181 (340 aa).

The segment at 1 to 36 (MAPLPHSVSPRHTQVADNGRLSEPTDYHPPTEISTD) is disordered. The Fe cation site is built by D47, H49, D128, N158, H237, H276, and H278. AMP contacts are provided by residues H49, D128, and 158–159 (NH). Residue H278 participates in AMP binding.

Belongs to the cyclic nucleotide phosphodiesterase class-III family. Requires Fe(2+) as cofactor.

In Psychrobacter sp. (strain PRwf-1), this protein is Probable cyclic nucleotide phosphodiesterase PsycPRwf_0181.